The chain runs to 717 residues: Polyribonucleotide nucleotidyltransferase (717 aa).

Asp495 and Asp501 together coordinate Mg(2+). In terms of domain architecture, KH spans 562 to 624 (PRMIMIQIPK…TALDSALSQI (63 aa)). An S1 motif domain is found at 634 to 703 (GEVYEGKVKS…KTGKYRLSRK (70 aa)).

The protein belongs to the polyribonucleotide nucleotidyltransferase family. Mg(2+) serves as cofactor.

The protein localises to the cytoplasm. It carries out the reaction RNA(n+1) + phosphate = RNA(n) + a ribonucleoside 5'-diphosphate. Functionally, involved in mRNA degradation. Catalyzes the phosphorolysis of single-stranded polyribonucleotides processively in the 3'- to 5'-direction. The sequence is that of Polyribonucleotide nucleotidyltransferase from Cytophaga hutchinsonii (strain ATCC 33406 / DSM 1761 / CIP 103989 / NBRC 15051 / NCIMB 9469 / D465).